We begin with the raw amino-acid sequence, 109 residues long: Anti-sigma-B factor antagonist (109 aa).

In terms of domain architecture, STAS spans 3 to 109 (INVDVKQNEN…ISAKSEGGVQ (107 aa)). Phosphoserine occurs at positions 52 and 56. Thr57 carries the post-translational modification Phosphothreonine.

It belongs to the anti-sigma-factor antagonist family. As to quaternary structure, monomer. In stressed cells, forms a complex with RsbW. The predominant form of this complex has a stoichiometry of 2:2 (one dimer of RsbW is bound by two monomers of RsbV). Binds to RsbW in the presence of low levels of ATP or under conditions of energy or environmental stress (through dephosphorylation by RsbP or RsbU). Post-translationally, phosphorylated by RsbW on a serine residue. Dephosphorylated by RsbP or RsbU.

Functionally, positive regulator of sigma-B activity. Non-phosphorylated RsbV binds to RsbW, preventing its association with sigma-B. When phosphorylated, releases RsbW, which is then free to complex with and inactivate sigma-B. This chain is Anti-sigma-B factor antagonist (rsbV), found in Bacillus subtilis (strain 168).